The chain runs to 996 residues: TBC1 domain family member 31 (996 aa).

WD repeat units follow at residues 33-74, 75-116, 117-157, 158-200, 201-248, 249-296, and 297-334; these read HSTS…LHGN, RFNL…TVTK, ELVS…LDTF, QRKR…CDTL, FCKY…ATGL, FRII…IQTC, and KLLF…NVYS. Positions 388-414 form a coiled coil; it reads TRVLKQDLTGDLENKENELSEGLNKKR. The Rab-GAP TBC domain maps to 424 to 599; sequence EYPTKYRMFI…RLFDNIFSNH (176 aa). Residues 699–844 are a coiled coil; the sequence is ELDFLRERQT…LTTSQEAVAK (146 aa). A mediates direct interaction with PJA2 region spans residues 983 to 986; the sequence is RARN.

Interacts with PJA2; the interaction is direct and recruits PJA2 to centrosomes. Interacts with OFD1; regulates its activity in cilium assembly. Interacts with PRKACA.

It localises to the cytoplasm. Its subcellular location is the cytoskeleton. It is found in the microtubule organizing center. The protein localises to the centrosome. The protein resides in the centriolar satellite. It localises to the cilium basal body. Molecular adapter which is involved in cilium biogenesis. Part of a functional complex including OFD1 a centriolar protein involved in cilium assembly. Could regulate the cAMP-dependent phosphorylation of OFD1, and its subsequent ubiquitination by PJA2 which ultimately leads to its proteasomal degradation. In Mus musculus (Mouse), this protein is TBC1 domain family member 31.